Here is a 454-residue protein sequence, read N- to C-terminus: Serine--tRNA ligase (454 aa).

Thr247–Glu249 contacts L-serine. ATP-binding positions include Arg278–Glu280 and Val294. L-serine is bound at residue Glu301. An ATP-binding site is contributed by Glu365–Ser368. Thr400 provides a ligand contact to L-serine.

The protein belongs to the class-II aminoacyl-tRNA synthetase family. Type-1 seryl-tRNA synthetase subfamily. In terms of assembly, homodimer. The tRNA molecule binds across the dimer.

The protein localises to the cytoplasm. The enzyme catalyses tRNA(Ser) + L-serine + ATP = L-seryl-tRNA(Ser) + AMP + diphosphate + H(+). The catalysed reaction is tRNA(Sec) + L-serine + ATP = L-seryl-tRNA(Sec) + AMP + diphosphate + H(+). The protein operates within aminoacyl-tRNA biosynthesis; selenocysteinyl-tRNA(Sec) biosynthesis; L-seryl-tRNA(Sec) from L-serine and tRNA(Sec): step 1/1. Catalyzes the attachment of serine to tRNA(Ser). Is also able to aminoacylate tRNA(Sec) with serine, to form the misacylated tRNA L-seryl-tRNA(Sec), which will be further converted into selenocysteinyl-tRNA(Sec). This is Serine--tRNA ligase from Pyrobaculum calidifontis (strain DSM 21063 / JCM 11548 / VA1).